Reading from the N-terminus, the 250-residue chain is L-ascorbate peroxidase 1, cytosolic (250 aa).

H42 acts as the Proton acceptor in catalysis. A disordered region spans residues 113–137 (VPFHPGREDKPAPPPEGRLPDATKG). H163 contacts heme b. T164, T180, N182, and D187 together coordinate K(+).

It belongs to the peroxidase family. Ascorbate peroxidase subfamily. It depends on heme b as a cofactor. Expressed in roots, aerial vegetative parts and reproductive organs. Expressed in roots, leaves, stems and flowers.

It is found in the cytoplasm. The enzyme catalyses L-ascorbate + H2O2 = L-dehydroascorbate + 2 H2O. With respect to regulation, inhibited by p-chloromercuriphenylsulfonic acid (CMPSA). Its function is as follows. Plays a key role in hydrogen peroxide removal. The polypeptide is L-ascorbate peroxidase 1, cytosolic (Oryza sativa subsp. japonica (Rice)).